The following is a 464-amino-acid chain: Glutamyl-tRNA reductase (464 aa).

Residues 47 to 50 (TCNR), serine 145, 150 to 152 (EPQ), and glutamine 156 each bind substrate. Catalysis depends on cysteine 48, which acts as the Nucleophile. 225 to 230 (AAGEMN) contributes to the NADP(+) binding site.

It belongs to the glutamyl-tRNA reductase family. In terms of assembly, homodimer.

The enzyme catalyses (S)-4-amino-5-oxopentanoate + tRNA(Glu) + NADP(+) = L-glutamyl-tRNA(Glu) + NADPH + H(+). The protein operates within porphyrin-containing compound metabolism; protoporphyrin-IX biosynthesis; 5-aminolevulinate from L-glutamyl-tRNA(Glu): step 1/2. Functionally, catalyzes the NADPH-dependent reduction of glutamyl-tRNA(Glu) to glutamate 1-semialdehyde (GSA). The chain is Glutamyl-tRNA reductase from Psychrobacter cryohalolentis (strain ATCC BAA-1226 / DSM 17306 / VKM B-2378 / K5).